The sequence spans 155 residues: Transcription antitermination protein NusB (155 aa).

Belongs to the NusB family.

Functionally, involved in transcription antitermination. Required for transcription of ribosomal RNA (rRNA) genes. Binds specifically to the boxA antiterminator sequence of the ribosomal RNA (rrn) operons. This chain is Transcription antitermination protein NusB, found in Vibrio atlanticus (strain LGP32) (Vibrio splendidus (strain Mel32)).